Consider the following 176-residue polypeptide: Large ribosomal subunit protein eL20 (176 aa).

Residue lysine 11 forms a Glycyl lysine isopeptide (Lys-Gly) (interchain with G-Cter in SUMO2) linkage. Tyrosine 63 is subject to Phosphotyrosine. Serine 71 is subject to Phosphoserine. Lysine 76 carries the post-translational modification N6-succinyllysine. Serine 123 carries the post-translational modification Phosphoserine. Residues lysine 128 and lysine 170 each participate in a glycyl lysine isopeptide (Lys-Gly) (interchain with G-Cter in SUMO2) cross-link.

The protein belongs to the eukaryotic ribosomal protein eL20 family. In terms of assembly, component of the large ribosomal subunit. Binds IPO9 with high affinity.

The protein localises to the cytoplasm. Component of the large ribosomal subunit. The ribosome is a large ribonucleoprotein complex responsible for the synthesis of proteins in the cell. This Bos taurus (Bovine) protein is Large ribosomal subunit protein eL20 (RPL18A).